The sequence spans 191 residues: NAD(P)H-quinone oxidoreductase subunit L, chloroplastic (191 aa).

The transit peptide at 1 to 46 (MSRCGSLGLYAPNALPSLSLKPRSVKSPFCITSHTKPNDTLLHNVN) directs the protein to the chloroplast. 3 consecutive transmembrane segments (helical) span residues 61 to 81 (TILA…ALAI), 93 to 113 (VVLD…PIIM), and 129 to 149 (YLQF…APFL).

The protein belongs to the NDH complex subunit L family. Part of the chloroplast NDH complex, composed of a mixture of chloroplast and nucleus encoded subunits. Component of the NDH subcomplex A, at least composed of ndhH, ndhI, ndhJ, ndhK, ndhL, ndhM, ndhN and ndhO.

The protein resides in the plastid. It localises to the chloroplast thylakoid membrane. It carries out the reaction a plastoquinone + NADH + (n+1) H(+)(in) = a plastoquinol + NAD(+) + n H(+)(out). The catalysed reaction is a plastoquinone + NADPH + (n+1) H(+)(in) = a plastoquinol + NADP(+) + n H(+)(out). In terms of biological role, NDH shuttles electrons from NAD(P)H:plastoquinone, via FMN and iron-sulfur (Fe-S) centers, to quinones in the photosynthetic chain and possibly in a chloroplast respiratory chain. The immediate electron acceptor for the enzyme in this species is believed to be plastoquinone. Couples the redox reaction to proton translocation, and thus conserves the redox energy in a proton gradient. This is NAD(P)H-quinone oxidoreductase subunit L, chloroplastic from Arabidopsis thaliana (Mouse-ear cress).